The sequence spans 815 residues: Cell division control protein 48 homolog D (815 aa).

Ala-2 is modified (N-acetylalanine). The residue at position 42 (Ser-42) is a Phosphoserine. Residues 249 to 256 (GPPGSGKT) and 522 to 529 (GPPGCGKT) each bind ATP. The residue at position 720 (Ser-720) is a Phosphoserine. The interval 772–815 (GSEFRFPDAPTGTTGAFPGAAATVGGVDPFATSGGAADDDDLYS) is disordered. Residues 780-798 (APTGTTGAFPGAAATVGGV) are compositionally biased toward low complexity.

Belongs to the AAA ATPase family.

The protein localises to the nucleus. It localises to the cytoplasm. It is found in the cytoskeleton. Its subcellular location is the phragmoplast. Functionally, probably functions in cell division and growth processes. Interacts with certain SNAREs as part of specialized membrane fusion events where vesicles from the same organelle fuse (homotypic fusion). The sequence is that of Cell division control protein 48 homolog D (CDC48D) from Arabidopsis thaliana (Mouse-ear cress).